Reading from the N-terminus, the 314-residue chain is Probable cell division protein WhiA (314 aa).

The segment at residues 274–308 (SLKELGEMMSTGKISKSGVNHRLRKLNEMADKLRS) is a DNA-binding region (H-T-H motif).

This sequence belongs to the WhiA family.

Its function is as follows. Involved in cell division and chromosome segregation. This chain is Probable cell division protein WhiA, found in Staphylococcus saprophyticus subsp. saprophyticus (strain ATCC 15305 / DSM 20229 / NCIMB 8711 / NCTC 7292 / S-41).